We begin with the raw amino-acid sequence, 1196 residues long: DNA-directed RNA polymerase subunit beta (1196 aa).

This sequence belongs to the RNA polymerase beta chain family. In terms of assembly, the RNAP catalytic core consists of 2 alpha, 1 beta, 1 beta' and 1 omega subunit. When a sigma factor is associated with the core the holoenzyme is formed, which can initiate transcription.

The catalysed reaction is RNA(n) + a ribonucleoside 5'-triphosphate = RNA(n+1) + diphosphate. In terms of biological role, DNA-dependent RNA polymerase catalyzes the transcription of DNA into RNA using the four ribonucleoside triphosphates as substrates. The protein is DNA-directed RNA polymerase subunit beta of Lactococcus lactis subsp. lactis (strain IL1403) (Streptococcus lactis).